The chain runs to 348 residues: MEKRIFTEEMVETEVKHQPKQEFSNADIQLDEEPKAVKAELIIEESLKPSRFWLRLFLAALALFGIATIAQSVQWLIDTWQANQWIYFAFAVAFFGISLAGVGAIINEWRKLRWLRKHHYHQQVSQQLLLETADTSGEKAREFCKSVVKNLAQTPMVQQVEQRWQSQLDEAYNSKEVLYLFSENVLSPIDNQVKKLISKNAAENAIIVAVSPLALVDILMVAWRNIALVNKITKAYGMELGYISRLKLFRMVMTNMVFAGATEIASDVGLDFFSQNLTARLSVRAAQGIGMGLLTARLGIKAMEFCRPVVFQQNERPKLSVVRQELIGVLKEQMFSKSREEFEFFHNN.

3 helical membrane-spanning segments follow: residues 57 to 77 (FLAA…QWLI), 86 to 106 (IYFA…GAII), and 203 to 223 (ENAI…MVAW).

The protein belongs to the UPF0283 family.

The protein localises to the cell inner membrane. This Glaesserella parasuis serovar 5 (strain SH0165) (Haemophilus parasuis) protein is UPF0283 membrane protein HAPS_0079.